The sequence spans 271 residues: MNMLTEAAVEKALDQKMSNVPYKMIGQDVSVYYGEKRALFDVNLNIRENTVTALIGPSGCGKSTFLRSLNRMNDTIEGCRVAGKITLDGDDIYDPDIDVVELRARVGMVFQKPNPFPKSIYENVSYGPRIHGLAKSKADLDQIVESSLQRAGLWNEVKDRVHESGTGLSGGQQQRLCIARAVAVSPEVILMDEPCSALDPIATAKVEELIHELRENYTIVIVTHSMQQAARVSQRTAMFHLGNLVEENDTDKMFTNPDDPRTQDYIMGRFG.

One can recognise an ABC transporter domain in the interval 24-266 (MIGQDVSVYY…PDDPRTQDYI (243 aa)). Residue 56 to 63 (GPSGCGKS) participates in ATP binding.

The protein belongs to the ABC transporter superfamily. Phosphate importer (TC 3.A.1.7) family. In terms of assembly, the complex is composed of two ATP-binding proteins (PstB), two transmembrane proteins (PstC and PstA) and a solute-binding protein (PstS).

The protein localises to the cell inner membrane. It carries out the reaction phosphate(out) + ATP + H2O = ADP + 2 phosphate(in) + H(+). Its function is as follows. Part of the ABC transporter complex PstSACB involved in phosphate import. Responsible for energy coupling to the transport system. The chain is Phosphate import ATP-binding protein PstB from Rhizobium etli (strain ATCC 51251 / DSM 11541 / JCM 21823 / NBRC 15573 / CFN 42).